The chain runs to 417 residues: Adenosylhomocysteinase (417 aa).

Thr-53, Asp-125, and Glu-149 together coordinate substrate. 150–152 provides a ligand contact to NAD(+); that stretch reads TTT. Substrate is bound by residues Lys-179 and Asp-183. Residues Asn-184, 213–218, Glu-236, Asn-271, 292–294, and Asn-339 contribute to the NAD(+) site; these read GYGWVG and AGH.

This sequence belongs to the adenosylhomocysteinase family. The cofactor is NAD(+).

It is found in the cytoplasm. The enzyme catalyses S-adenosyl-L-homocysteine + H2O = L-homocysteine + adenosine. Its pathway is amino-acid biosynthesis; L-homocysteine biosynthesis; L-homocysteine from S-adenosyl-L-homocysteine: step 1/1. Its function is as follows. May play a key role in the regulation of the intracellular concentration of adenosylhomocysteine. The protein is Adenosylhomocysteinase of Saccharolobus solfataricus (strain ATCC 35092 / DSM 1617 / JCM 11322 / P2) (Sulfolobus solfataricus).